The primary structure comprises 351 residues: Ribonucleoside-diphosphate reductase subunit beta (351 aa).

3 residues coordinate Fe cation: aspartate 94, glutamate 124, and histidine 127. Tyrosine 131 is a catalytic residue. Glutamate 191, glutamate 225, and histidine 228 together coordinate Fe cation.

It belongs to the ribonucleoside diphosphate reductase small chain family. As to quaternary structure, tetramer of two alpha and two beta subunits. Fe cation serves as cofactor.

The enzyme catalyses a 2'-deoxyribonucleoside 5'-diphosphate + [thioredoxin]-disulfide + H2O = a ribonucleoside 5'-diphosphate + [thioredoxin]-dithiol. Functionally, provides the precursors necessary for DNA synthesis. Catalyzes the biosynthesis of deoxyribonucleotides from the corresponding ribonucleotides. The protein is Ribonucleoside-diphosphate reductase subunit beta (nrdB) of Treponema pallidum (strain Nichols).